A 270-amino-acid chain; its full sequence is Orotidine 5'-phosphate decarboxylase (270 aa).

The Proton donor role is filled by Lys-89.

The protein belongs to the OMP decarboxylase family. Type 2 subfamily.

The catalysed reaction is orotidine 5'-phosphate + H(+) = UMP + CO2. The protein operates within pyrimidine metabolism; UMP biosynthesis via de novo pathway; UMP from orotate: step 2/2. This Dehalococcoides mccartyi (strain ATCC BAA-2100 / JCM 16839 / KCTC 5957 / BAV1) protein is Orotidine 5'-phosphate decarboxylase.